Consider the following 176-residue polypeptide: NAD(P)H-quinone oxidoreductase subunit J (176 aa).

It belongs to the complex I 30 kDa subunit family. In terms of assembly, NDH-1 can be composed of about 15 different subunits; different subcomplexes with different compositions have been identified which probably have different functions.

Its subcellular location is the cellular thylakoid membrane. The enzyme catalyses a plastoquinone + NADH + (n+1) H(+)(in) = a plastoquinol + NAD(+) + n H(+)(out). The catalysed reaction is a plastoquinone + NADPH + (n+1) H(+)(in) = a plastoquinol + NADP(+) + n H(+)(out). Functionally, NDH-1 shuttles electrons from an unknown electron donor, via FMN and iron-sulfur (Fe-S) centers, to quinones in the respiratory and/or the photosynthetic chain. The immediate electron acceptor for the enzyme in this species is believed to be plastoquinone. Couples the redox reaction to proton translocation, and thus conserves the redox energy in a proton gradient. Cyanobacterial NDH-1 also plays a role in inorganic carbon-concentration. The polypeptide is NAD(P)H-quinone oxidoreductase subunit J (Prochlorococcus marinus (strain MIT 9515)).